Here is a 450-residue protein sequence, read N- to C-terminus: Equilibrative nucleotide transporter 1 (450 aa).

The next 11 membrane-spanning stretches (helical) occupy residues phenylalanine 63–isoleucine 83, isoleucine 101–tyrosine 121, leucine 133–valine 153, alanine 168–alanine 188, methionine 196–leucine 216, leucine 234–histidine 254, histidine 300–threonine 320, isoleucine 334–phenylalanine 354, isoleucine 361–histidine 381, isoleucine 394–alanine 414, and threonine 430–isoleucine 450.

This sequence belongs to the SLC29A/ENT transporter (TC 2.A.57) family. In terms of tissue distribution, in young seedlings, expressed in root elongation zone, root cortex, root-hair, at the transition to the shoot and cotyledons. Expressed in hydathodes of fully developed leaves and pollen.

It localises to the vacuole membrane. Its function is as follows. Nucleoside transporter involved in adenosine transport and required for nucleotide metabolism which influences growth and pollen germination. Has high affinity for adenosine when expressed in a heterologous system (yeast). This Arabidopsis thaliana (Mouse-ear cress) protein is Equilibrative nucleotide transporter 1 (ENT1).